A 330-amino-acid polypeptide reads, in one-letter code: NADH-quinone oxidoreductase subunit H (330 aa).

8 consecutive transmembrane segments (helical) span residues 3–23 (AAFV…FSAL), 76–96 (PVFM…MAAI), 118–138 (VGLL…LLAG), 161–181 (EVVT…ISLV), 188–208 (AGGM…LFLI), 244–264 (FFIG…LIFL), 272–292 (FIPG…LFLW), and 307–327 (WLCW…TGIV).

It belongs to the complex I subunit 1 family. NDH-1 is composed of 14 different subunits. Subunits NuoA, H, J, K, L, M, N constitute the membrane sector of the complex.

It is found in the cell inner membrane. The enzyme catalyses a quinone + NADH + 5 H(+)(in) = a quinol + NAD(+) + 4 H(+)(out). Its function is as follows. NDH-1 shuttles electrons from NADH, via FMN and iron-sulfur (Fe-S) centers, to quinones in the respiratory chain. The immediate electron acceptor for the enzyme in this species is believed to be ubiquinone. Couples the redox reaction to proton translocation (for every two electrons transferred, four hydrogen ions are translocated across the cytoplasmic membrane), and thus conserves the redox energy in a proton gradient. This subunit may bind ubiquinone. The protein is NADH-quinone oxidoreductase subunit H of Nitratiruptor sp. (strain SB155-2).